Here is a 271-residue protein sequence, read N- to C-terminus: Formamidopyrimidine-DNA glycosylase (271 aa).

Proline 2 functions as the Schiff-base intermediate with DNA in the catalytic mechanism. Glutamate 3 (proton donor) is an active-site residue. Catalysis depends on lysine 58, which acts as the Proton donor; for beta-elimination activity. DNA contacts are provided by histidine 92, arginine 111, and arginine 152. The segment at 237 to 271 adopts an FPG-type zinc-finger fold; it reads MVYGREGQACKHCGRELKHATIGQRATVWCAACQR. The active-site Proton donor; for delta-elimination activity is the arginine 261.

This sequence belongs to the FPG family. In terms of assembly, monomer. Zn(2+) serves as cofactor.

It catalyses the reaction Hydrolysis of DNA containing ring-opened 7-methylguanine residues, releasing 2,6-diamino-4-hydroxy-5-(N-methyl)formamidopyrimidine.. It carries out the reaction 2'-deoxyribonucleotide-(2'-deoxyribose 5'-phosphate)-2'-deoxyribonucleotide-DNA = a 3'-end 2'-deoxyribonucleotide-(2,3-dehydro-2,3-deoxyribose 5'-phosphate)-DNA + a 5'-end 5'-phospho-2'-deoxyribonucleoside-DNA + H(+). In terms of biological role, involved in base excision repair of DNA damaged by oxidation or by mutagenic agents. Acts as a DNA glycosylase that recognizes and removes damaged bases. Has a preference for oxidized purines, such as 7,8-dihydro-8-oxoguanine (8-oxoG). Has AP (apurinic/apyrimidinic) lyase activity and introduces nicks in the DNA strand. Cleaves the DNA backbone by beta-delta elimination to generate a single-strand break at the site of the removed base with both 3'- and 5'-phosphates. The polypeptide is Formamidopyrimidine-DNA glycosylase (Xanthomonas campestris pv. campestris (strain B100)).